Reading from the N-terminus, the 346-residue chain is Selenoprotein V (346 aa).

Disordered stretches follow at residues 1–40 (MNNQ…VRTR) and 151–206 (LDPP…PGPT). Residues 151-162 (LDPPPEPAPELP) are compositionally biased toward pro residues. The segment at residues 270–273 (CGLU) is a cross-link (cysteinyl-selenocysteine (Cys-Sec); redox-active). Residue U273 is a non-standard amino acid, selenocysteine.

Belongs to the SelWTH family. In terms of processing, truncated SELENOV proteins produced by failed UGA/Sec decoding are ubiquitinated by the CRL2(APPBP2) complex, which recognizes the glycine (Gly) at the C-terminus of truncated SELENOV proteins. As to expression, testis specific.

May be involved in a redox-related process. This is Selenoprotein V from Homo sapiens (Human).